The sequence spans 795 residues: Nucleolar complex protein 3 homolog (795 aa).

Disordered stretches follow at residues 1-88 (MKPM…PLDM), 124-144 (RDDV…EPEK), and 168-190 (IPSE…EVPE). 2 stretches are compositionally biased toward basic and acidic residues: residues 22–39 (LKLD…ESSA) and 46–58 (QKQL…DVRS). Acidic residues predominate over residues 74-88 (EEEYEVEEESLPLDM). Residues 171–181 (EEQEENEEEMD) are compositionally biased toward acidic residues. Residues 447 to 492 (SYKDKKKNLSRMQRKWKKAEEKLERELLEAEASESKEKKLKLNTET) are a coiled coil.

The protein belongs to the CBF/MAK21 family.

The protein resides in the nucleus. The protein localises to the nucleolus. This chain is Nucleolar complex protein 3 homolog (noc3l), found in Xenopus laevis (African clawed frog).